The chain runs to 833 residues: V-type proton ATPase 116 kDa subunit a 4 (833 aa).

Topologically, residues 1–390 (MASVFRSEEM…DAYGVGSYRE (390 aa)) are cytoplasmic. A helical transmembrane segment spans residues 391–409 (INPAPYTIITFPFLFAVMF). The Vacuolar portion of the chain corresponds to 410–411 (GD). A helical membrane pass occupies residues 412 to 428 (CGHGMVMLMAALWMVLN). Over 429–443 (ERHLLAQKSTNEMWN) the chain is Cytoplasmic. A helical membrane pass occupies residues 444-473 (IFFNGRYLILLMGIFSIYTGLIYNDCFSKS). The Vacuolar segment spans residues 474 to 538 (FNIFGSSWSV…ASNKLTFLNS (65 aa)). Residues 539 to 558 (YKMKMSVILGIAHMIFGVIL) form a helical membrane-spanning segment. Topologically, residues 559–576 (SLFNHIYFRRTLNIILQF) are cytoplasmic. The chain crosses the membrane as a helical span at residues 577–597 (IPEMIFMLSLFGYLVFMIIFK). Topologically, residues 598–642 (WCRYDAHTSRKAPSILIHFIGMFLFDYDDSSNAPLYGHQQEVQTF) are vacuolar. The helical transmembrane segment at 643–662 (FVIIALVSVPWMLLIKPFVL) threads the bilayer. At 663-720 (RAKHQKSQLQSFTIHEDAVEGDHSGHSSKKTAGAHGMKDGHEEEFNFGDIFVHQAIHT) the chain is on the cytoplasmic side. Residues 681–700 (VEGDHSGHSSKKTAGAHGMK) are disordered. A helical transmembrane segment spans residues 721-745 (IEYCLGCISNTASYLRLWALSLAHA). Topologically, residues 746–766 (ELSEVLWTMVMSIGLRLQGWA) are vacuolar. The chain crosses the membrane as a helical span at residues 767 to 805 (GLVGVFIIFAVFAVLTVAILLVMEGLSAFLHALRLHWVE). At 806–833 (FQNKFYEGAGSKFSPFSFKHVLEGTAEE) the chain is on the cytoplasmic side.

The protein belongs to the V-ATPase 116 kDa subunit family. In terms of assembly, V-ATPase is a heteromultimeric enzyme made up of two complexes: the ATP-hydrolytic V1 complex and the proton translocation V0 complex. The V1 complex consists of three catalytic AB heterodimers that form a heterohexamer, three peripheral stalks each consisting of EG heterodimers, one central rotor including subunits D and F, and the regulatory subunits C and H. The proton translocation complex V0 consists of the proton transport subunit a, a ring of proteolipid subunits c9c'', rotary subunit d, subunits e and f, and the accessory subunits ATP6AP1/Ac45 and ATP6AP2/PRR. Interacts with the V1 complex V-ATPase subunit A ATP6V1A. Interacts with the V0 complex V-ATPase subunit c ATP6V0C. As to expression, specifically expressed in kidney, but not in the heart, brain, spleen, lung, liver, muscle, or testis. Distribution within the kidney appears more widespread than that seen in man. High intensity staining at the surface of intercalated cells, with additional expression in the proximal tubule.

Its subcellular location is the apical cell membrane. It is found in the basolateral cell membrane. Functionally, subunit of the V0 complex of vacuolar(H+)-ATPase (V-ATPase), a multisubunit enzyme composed of a peripheral complex (V1) that hydrolyzes ATP and a membrane integral complex (V0) that translocates protons. V-ATPase is responsible for acidifying and maintaining the pH of intracellular compartments and in some cell types, is targeted to the plasma membrane, where it is responsible for acidifying the extracellular environment. Involved in normal vectorial acid transport into the urine by the kidney. The protein is V-type proton ATPase 116 kDa subunit a 4 (Atp6v0a4) of Mus musculus (Mouse).